A 213-amino-acid polypeptide reads, in one-letter code: Adenylate kinase (213 aa).

Residue 10–15 (GAGKGT) participates in ATP binding. The NMP stretch occupies residues 30 to 59 (STGNLLRDEVKSKTDLGVDIEKLISNGKFV). AMP contacts are provided by residues Thr31, Arg36, 57-59 (KFV), 85-88 (GYPR), and Gln92. Residues 126–162 (GRMTCEKCNMTLNEYFNKEQIELHPCGVEHLKKRKDD) form an LID region. Arg127 contributes to the ATP binding site. AMP is bound by residues Arg159 and Arg170. Gly198 is a binding site for ATP.

This sequence belongs to the adenylate kinase family. As to quaternary structure, monomer.

The protein localises to the cytoplasm. It carries out the reaction AMP + ATP = 2 ADP. It participates in purine metabolism; AMP biosynthesis via salvage pathway; AMP from ADP: step 1/1. Its function is as follows. Catalyzes the reversible transfer of the terminal phosphate group between ATP and AMP. Plays an important role in cellular energy homeostasis and in adenine nucleotide metabolism. This Pelagibacter ubique (strain HTCC1062) protein is Adenylate kinase.